We begin with the raw amino-acid sequence, 251 residues long: MEKTKPAAPSSVPRHVAIIMDGNNRWAKKRLLPGVAGHKAGVDAVRAVIEVCAKSGVEVLTLFAFSSENWQRPAEEVGALMELFFSALRREAKRLDENNISLRIIGDRSRFHPELQAAMREAEAVTAGNNRFILQIAANYGGQWDIAQAAQRLAREVQAGHLRPEDITPGLLQTCLATGDLPLPDLCIRTGGEHRISNFLLWQLAYAELYFSDLYWPDFKHEAMRNALADFASRQRRFGKTSEQVEAGARA.

Residue D21 is part of the active site. D21 is a Mg(2+) binding site. Substrate contacts are provided by residues 22 to 25, W26, H38, and 66 to 68; these read GNNR and SSE. N69 serves as the catalytic Proton acceptor. Substrate is bound by residues W70, R72, R189, and 195-197; that span reads RIS. E208 is a binding site for Mg(2+).

This sequence belongs to the UPP synthase family. In terms of assembly, homodimer. Mg(2+) serves as cofactor.

The catalysed reaction is 8 isopentenyl diphosphate + (2E,6E)-farnesyl diphosphate = di-trans,octa-cis-undecaprenyl diphosphate + 8 diphosphate. Catalyzes the sequential condensation of isopentenyl diphosphate (IPP) with (2E,6E)-farnesyl diphosphate (E,E-FPP) to yield (2Z,6Z,10Z,14Z,18Z,22Z,26Z,30Z,34E,38E)-undecaprenyl diphosphate (di-trans,octa-cis-UPP). UPP is the precursor of glycosyl carrier lipid in the biosynthesis of bacterial cell wall polysaccharide components such as peptidoglycan and lipopolysaccharide. This Pseudomonas putida (strain ATCC 47054 / DSM 6125 / CFBP 8728 / NCIMB 11950 / KT2440) protein is Ditrans,polycis-undecaprenyl-diphosphate synthase ((2E,6E)-farnesyl-diphosphate specific).